Here is a 76-residue protein sequence, read N- to C-terminus: U10-ctenitoxin-Pn1a (76 aa).

The first 15 residues, 1–15 (SFVFYLFTLITVVRA), serve as a signal peptide directing secretion. Positions 16–36 (EEFILENEAEDIAPAVHGESG) are excised as a propeptide. Intrachain disulfides connect Cys39-Cys54, Cys46-Cys59, Cys53-Cys73, and Cys61-Cys71.

Belongs to the neurotoxin 02 (plectoxin) family. 09 subfamily. In terms of tissue distribution, expressed by the venom gland.

The protein resides in the secreted. The sequence is that of U10-ctenitoxin-Pn1a from Phoneutria nigriventer (Brazilian armed spider).